A 156-amino-acid chain; its full sequence is Large ribosomal subunit protein eL29 (156 aa).

A compositionally biased stretch (basic residues) spans 1-26; that stretch reads MAKSKNHTTHNQSRKWHRNGIKKPRS. Disordered regions lie at residues 1–35 and 116–156; these read MAKSKNHTTHNQSRKWHRNGIKKPRSQRYESLKGV and RRLC…VKAP. At lysine 5 the chain carries N6-methyllysine. Phosphoserine is present on serine 31. Lysine 33 carries the N6-acetyllysine modification. 2 consecutive repeat copies span residues 129–136 and 137–144. Positions 129 to 144 are 2 X 8 AA tandem repeats of A-X-A-K-A-P-A-[KQ]; that stretch reads AEAKAPAKAQAKAPAQ. Over residues 134–156 the composition is skewed to low complexity; sequence PAKAQAKAPAQAPKGAQAPVKAP.

Belongs to the eukaryotic ribosomal protein eL29 family. In terms of assembly, component of the large ribosomal subunit.

It localises to the cytoplasm. Its function is as follows. Component of the large ribosomal subunit. The ribosome is a large ribonucleoprotein complex responsible for the synthesis of proteins in the cell. The sequence is that of Large ribosomal subunit protein eL29 (Rpl29) from Rattus norvegicus (Rat).